A 156-amino-acid chain; its full sequence is 6,7-dimethyl-8-ribityllumazine synthase (156 aa).

5-amino-6-(D-ribitylamino)uracil contacts are provided by residues Phe25, 59 to 61 (AFE), and 83 to 85 (AVI). 88 to 89 (AT) contacts (2S)-2-hydroxy-3-oxobutyl phosphate. Catalysis depends on His91, which acts as the Proton donor. Phe116 serves as a coordination point for 5-amino-6-(D-ribitylamino)uracil. Arg130 provides a ligand contact to (2S)-2-hydroxy-3-oxobutyl phosphate.

The protein belongs to the DMRL synthase family.

The catalysed reaction is (2S)-2-hydroxy-3-oxobutyl phosphate + 5-amino-6-(D-ribitylamino)uracil = 6,7-dimethyl-8-(1-D-ribityl)lumazine + phosphate + 2 H2O + H(+). It participates in cofactor biosynthesis; riboflavin biosynthesis; riboflavin from 2-hydroxy-3-oxobutyl phosphate and 5-amino-6-(D-ribitylamino)uracil: step 1/2. Its function is as follows. Catalyzes the formation of 6,7-dimethyl-8-ribityllumazine by condensation of 5-amino-6-(D-ribitylamino)uracil with 3,4-dihydroxy-2-butanone 4-phosphate. This is the penultimate step in the biosynthesis of riboflavin. The protein is 6,7-dimethyl-8-ribityllumazine synthase of Nitratidesulfovibrio vulgaris (strain DSM 19637 / Miyazaki F) (Desulfovibrio vulgaris).